We begin with the raw amino-acid sequence, 363 residues long: HAUS augmin-like complex subunit 4 (363 aa).

It belongs to the HAUS4 family. Component of the HAUS augmin-like complex. The complex interacts with the gamma-tubulin ring complex and this interaction is required for spindle assembly. Interacts with EML3 (phosphorylated at 'Thr-881').

It is found in the cytoplasm. It localises to the cytoskeleton. Its subcellular location is the microtubule organizing center. The protein resides in the centrosome. The protein localises to the spindle. Its function is as follows. Contributes to mitotic spindle assembly, maintenance of centrosome integrity and completion of cytokinesis as part of the HAUS augmin-like complex. This Homo sapiens (Human) protein is HAUS augmin-like complex subunit 4 (HAUS4).